Reading from the N-terminus, the 356-residue chain is Holliday junction branch migration complex subunit RuvB (356 aa).

The large ATPase domain (RuvB-L) stretch occupies residues 4–191 (TDKLATEQRI…FGIVARLEFY (188 aa)). ATP-binding positions include L30, R31, G72, K75, T76, T77, 138 to 140 (EDY), R181, Y191, and R228. Mg(2+) is bound at residue T76. The small ATPAse domain (RuvB-S) stretch occupies residues 192-262 (DAEQLSRIVR…VADAALAMLD (71 aa)). The head domain (RuvB-H) stretch occupies residues 265 to 356 (PVGFDLMDRK…RDEWDTPDGK (92 aa)). DNA contacts are provided by R301, R320, and R325.

It belongs to the RuvB family. As to quaternary structure, homohexamer. Forms an RuvA(8)-RuvB(12)-Holliday junction (HJ) complex. HJ DNA is sandwiched between 2 RuvA tetramers; dsDNA enters through RuvA and exits via RuvB. An RuvB hexamer assembles on each DNA strand where it exits the tetramer. Each RuvB hexamer is contacted by two RuvA subunits (via domain III) on 2 adjacent RuvB subunits; this complex drives branch migration. In the full resolvosome a probable DNA-RuvA(4)-RuvB(12)-RuvC(2) complex forms which resolves the HJ.

It localises to the cytoplasm. It carries out the reaction ATP + H2O = ADP + phosphate + H(+). Functionally, the RuvA-RuvB-RuvC complex processes Holliday junction (HJ) DNA during genetic recombination and DNA repair, while the RuvA-RuvB complex plays an important role in the rescue of blocked DNA replication forks via replication fork reversal (RFR). RuvA specifically binds to HJ cruciform DNA, conferring on it an open structure. The RuvB hexamer acts as an ATP-dependent pump, pulling dsDNA into and through the RuvAB complex. RuvB forms 2 homohexamers on either side of HJ DNA bound by 1 or 2 RuvA tetramers; 4 subunits per hexamer contact DNA at a time. Coordinated motions by a converter formed by DNA-disengaged RuvB subunits stimulates ATP hydrolysis and nucleotide exchange. Immobilization of the converter enables RuvB to convert the ATP-contained energy into a lever motion, pulling 2 nucleotides of DNA out of the RuvA tetramer per ATP hydrolyzed, thus driving DNA branch migration. The RuvB motors rotate together with the DNA substrate, which together with the progressing nucleotide cycle form the mechanistic basis for DNA recombination by continuous HJ branch migration. Branch migration allows RuvC to scan DNA until it finds its consensus sequence, where it cleaves and resolves cruciform DNA. This chain is Holliday junction branch migration complex subunit RuvB, found in Burkholderia cenocepacia (strain HI2424).